The sequence spans 329 residues: Nicotianamine synthase 8 (329 aa).

This sequence belongs to the nicotianamine synthase (NAS)-like family. In terms of assembly, homotrimer.

The enzyme catalyses 3 S-adenosyl-L-methionine = nicotianamine + 3 S-methyl-5'-thioadenosine + 3 H(+). Its function is as follows. Synthesizes nicotianamine, a polyamine that is the first intermediate in the synthesis of the phytosiderophores of the mugineic acid type found in gramineae which serve as a sensor for the physiological iron status within the plant, and/or might be involved in the transport of iron. This Hordeum vulgare (Barley) protein is Nicotianamine synthase 8 (NAS8).